Here is a 109-residue protein sequence, read N- to C-terminus: Protein reprimo (109 aa).

N-linked (GlcNAc...) asparagine glycans are attached at residues Asn-7 and Asn-18. The helical transmembrane segment at 56–76 threads the bilayer; it reads VVQIAVMCVLSLTVVFGIFFL. Position 98 is a phosphoserine (Ser-98).

It belongs to the reprimo family.

Its subcellular location is the cytoplasm. It is found in the membrane. Its function is as follows. May be involved in the regulation of p53-dependent G2 arrest of the cell cycle. Seems to induce cell cycle arrest by inhibiting CDK1 activity and nuclear translocation of the CDC2 cyclin B1 complex. The sequence is that of Protein reprimo (Rprm) from Mus musculus (Mouse).